We begin with the raw amino-acid sequence, 592 residues long: uncharacterized protein (592 aa).

Helical transmembrane passes span 12–32 (IWILQTLAITSVVFSFGIFLL), 58–78 (PILFFLLIVAMTLLSVRISLV), 102–122 (MGLFCVIAASSVSAALVSYYL), 191–211 (ISYTILLWGLAGPMIVLGVEI), 214–234 (MMVFLVFGYVIFTTLIAFWLG), and 299–319 (FSGFNLVVSQISVVFPLLIQV). The 301-residue stretch at 58 to 358 (PILFFLLIVA…FRSTYDNFAS (301 aa)) folds into the ABC transmembrane type-1 domain. In terms of domain architecture, ABC transporter spans 391–592 (VIFKNLSIQN…LQDKGQWQVL (202 aa)). 424–431 (GKSGAGKT) provides a ligand contact to ATP.

Belongs to the ABC transporter superfamily.

The protein resides in the cell inner membrane. This is an uncharacterized protein from Haemophilus influenzae (strain ATCC 51907 / DSM 11121 / KW20 / Rd).